Reading from the N-terminus, the 221-residue chain is Deoxyribose-phosphate aldolase (221 aa).

Asp-89 functions as the Proton donor/acceptor in the catalytic mechanism. Lys-151 acts as the Schiff-base intermediate with acetaldehyde in catalysis. The active-site Proton donor/acceptor is Lys-180.

Belongs to the DeoC/FbaB aldolase family. DeoC type 1 subfamily.

Its subcellular location is the cytoplasm. It carries out the reaction 2-deoxy-D-ribose 5-phosphate = D-glyceraldehyde 3-phosphate + acetaldehyde. The protein operates within carbohydrate degradation; 2-deoxy-D-ribose 1-phosphate degradation; D-glyceraldehyde 3-phosphate and acetaldehyde from 2-deoxy-alpha-D-ribose 1-phosphate: step 2/2. In terms of biological role, catalyzes a reversible aldol reaction between acetaldehyde and D-glyceraldehyde 3-phosphate to generate 2-deoxy-D-ribose 5-phosphate. The polypeptide is Deoxyribose-phosphate aldolase (Mesomycoplasma hyopneumoniae (strain J / ATCC 25934 / NCTC 10110) (Mycoplasma hyopneumoniae)).